The sequence spans 309 residues: Malate dehydrogenase (309 aa).

Residues 9–14 (GAGFVG) and Asp-33 each bind NAD(+). Residues Arg-82 and Arg-88 each coordinate substrate. Residues Asn-95 and 118 to 120 (VNN) contribute to the NAD(+) site. Residues Asn-120 and Arg-151 each contribute to the substrate site. His-175 acts as the Proton acceptor in catalysis.

Belongs to the LDH/MDH superfamily. MDH type 3 family.

The enzyme catalyses (S)-malate + NAD(+) = oxaloacetate + NADH + H(+). In terms of biological role, catalyzes the reversible oxidation of malate to oxaloacetate. The polypeptide is Malate dehydrogenase (Roseiflexus sp. (strain RS-1)).